The sequence spans 436 residues: Prenyltransferase nscD (436 aa).

Belongs to the tryptophan dimethylallyltransferase family.

It functions in the pathway secondary metabolite biosynthesis. In terms of biological role, prenyltransferase; part of the gene cluster that mediates the biosynthesis of neosartoricin B, a prenylated anthracenone that probably exhibits T-cell antiproliferative activity, suggestive of a physiological role as an immunosuppressive agent. The non-reducing polyketide synthase nscA probably synthesizes and cyclizes the decaketide backbone. The hydrolase nscB then mediates the product release through hydrolysis followed by spontaneous decarboxylation. The prenyltransferase nscD catalyzes the addition of the dimethylallyl group to the aromatic C5. The FAD-dependent monooxygenase nscC is then responsible for the stereospecific hydroxylation at C2. Neosartoricin B can be converted into two additional compounds neosartoricins C and D. Neosartoricin C is a spirocyclic compound that is cyclized through the attack of C3 hydroxyl on C14, followed by dehydration. On the other hand, neosartoricin D is a further cyclized compound in which attack of C2 on C14 in neosartoricin C results in the formation of the acetal-containing dioxabicyclo-octanone ring. Both of these compounds are novel and possibly represent related metabolites of the gene cluster. The protein is Prenyltransferase nscD of Arthroderma benhamiae (strain ATCC MYA-4681 / CBS 112371) (Trichophyton mentagrophytes).